Here is a 255-residue protein sequence, read N- to C-terminus: Folate receptor beta (255 aa).

The N-terminal stretch at 1-16 is a signal peptide; that stretch reads MVWKWMPLLLLLVCVA. 8 cysteine pairs are disulfide-bonded: C31-C59, C51-C99, C60-C103, C83-C169, C90-C140, C129-C203, C133-C183, and C146-C163. Positions 97 and 101 each coordinate folate. N115 is a glycosylation site (N-linked (GlcNAc...) asparagine). Residues 118-122, 151-156, and S190 each bind folate; these read WRKER and HRGWDW. N-linked (GlcNAc...) asparagine glycosylation is present at N195. A lipid anchor (GPI-anchor amidated asparagine) is attached at N230. A propeptide spans 231-255 (removed in mature form); sequence AGEMLHGTGGLLLSLALMLQLWLLG.

Belongs to the folate receptor family. In terms of processing, N-glycosylated. In terms of tissue distribution, expressed in placenta and hematopoietic cells. Expression is increased in malignant tissues.

The protein resides in the cell membrane. It is found in the secreted. Functionally, binds to folate and reduced folic acid derivatives and mediates delivery of 5-methyltetrahydrofolate and folate analogs into the interior of cells. Has high affinity for folate and folic acid analogs at neutral pH. Exposure to slightly acidic pH after receptor endocytosis triggers a conformation change that strongly reduces its affinity for folates and mediates their release. The sequence is that of Folate receptor beta (FOLR2) from Homo sapiens (Human).